Consider the following 224-residue polypeptide: Protein FAM3D (224 aa).

Positions 1 to 25 (MRVSGVLRLLALIFAIVTTWMFIRS) are cleaved as a signal peptide. Intrachain disulfides connect C55–C83 and C61–C218. A GG-type lectin domain is found at 64 to 222 (NYFAFKICSG…LEMEGCMPPK (159 aa)). N-linked (GlcNAc...) asparagine glycosylation occurs at N107.

This sequence belongs to the FAM3 family. In terms of tissue distribution, abundantly expressed in placenta and weakly expressed in small intestine.

Its subcellular location is the secreted. This is Protein FAM3D (FAM3D) from Homo sapiens (Human).